The sequence spans 367 residues: MQSSLARPPVLAGCGERRGLAAVARCRAEAAAPVWTASRASAGPYTGRDPEVKKPAWLRQRAAQGEKYARLRESIGELKLNTVCVEAQCPNIGECWNGGGGAGGEGDGIATATIMVLGDTCTRGCRFCAVKTSNKPPPPDPLEPLNTALAVASWGVDYVVLTSVDRDDLPDGGSSHFAQTVKALKELKPGILVECLTSDFRGDLEAISSLANSGLDVYAHNIETVRSLQRVVRDPRAGYDQSLAVLKHAKGSREDMITKSSIMLGLGETDEEVKQAMMDLRAIGVDILTLGQYLQPSERHLTVREYVTPQKFQFWKEYGESVGFRYVASGPLVRSSYRAGELFIQNLVRNNKTESSMDPYAEITKSN.

Residues C84, C89, C95, C121, C125, C128, and S336 each coordinate [4Fe-4S] cluster. Residues 104 to 325 (GEGDGIATAT…KEYGESVGFR (222 aa)) enclose the Radical SAM core domain.

Belongs to the radical SAM superfamily. Lipoyl synthase family. [4Fe-4S] cluster is required as a cofactor.

The protein resides in the plastid. Its subcellular location is the chloroplast. The enzyme catalyses [[Fe-S] cluster scaffold protein carrying a second [4Fe-4S](2+) cluster] + N(6)-octanoyl-L-lysyl-[protein] + 2 oxidized [2Fe-2S]-[ferredoxin] + 2 S-adenosyl-L-methionine + 4 H(+) = [[Fe-S] cluster scaffold protein] + N(6)-[(R)-dihydrolipoyl]-L-lysyl-[protein] + 4 Fe(3+) + 2 hydrogen sulfide + 2 5'-deoxyadenosine + 2 L-methionine + 2 reduced [2Fe-2S]-[ferredoxin]. Its pathway is protein modification; protein lipoylation via endogenous pathway; protein N(6)-(lipoyl)lysine from octanoyl-[acyl-carrier-protein]: step 2/2. In terms of biological role, catalyzes the radical-mediated insertion of two sulfur atoms into the C-6 and C-8 positions of the octanoyl moiety bound to the lipoyl domains of lipoate-dependent enzymes, thereby converting the octanoylated domains into lipoylated derivatives. The sequence is that of Lipoyl synthase 2, chloroplastic from Zea mays (Maize).